The primary structure comprises 445 residues: Probable glycine dehydrogenase (decarboxylating) subunit 1 (445 aa).

The protein belongs to the GcvP family. N-terminal subunit subfamily. In terms of assembly, the glycine cleavage system is composed of four proteins: P, T, L and H. In this organism, the P 'protein' is a heterodimer of two subunits.

It catalyses the reaction N(6)-[(R)-lipoyl]-L-lysyl-[glycine-cleavage complex H protein] + glycine + H(+) = N(6)-[(R)-S(8)-aminomethyldihydrolipoyl]-L-lysyl-[glycine-cleavage complex H protein] + CO2. Functionally, the glycine cleavage system catalyzes the degradation of glycine. The P protein binds the alpha-amino group of glycine through its pyridoxal phosphate cofactor; CO(2) is released and the remaining methylamine moiety is then transferred to the lipoamide cofactor of the H protein. The chain is Probable glycine dehydrogenase (decarboxylating) subunit 1 from Anaeromyxobacter dehalogenans (strain 2CP-1 / ATCC BAA-258).